A 318-amino-acid chain; its full sequence is Ubiquitin-like domain-containing CTD phosphatase 1 (318 aa).

The Ubiquitin-like domain occupies 3–81; the sequence is LSLIIKWGGQ…IMMMGTREES (79 aa). An FCP1 homology domain is found at 133 to 294; the sequence is PREGKKLLVL…LKLTQYLKEI (162 aa). Mg(2+)-binding residues include Asp-143, Asp-145, and Asp-253.

Mg(2+) serves as cofactor.

It is found in the nucleus. It catalyses the reaction O-phospho-L-seryl-[protein] + H2O = L-seryl-[protein] + phosphate. The catalysed reaction is O-phospho-L-threonyl-[protein] + H2O = L-threonyl-[protein] + phosphate. Functionally, dephosphorylates 26S nuclear proteasomes, thereby decreasing their proteolytic activity. Recruited to the 19S regulatory particle of the 26S proteasome where it dephosphorylates 19S component PSMC2 which impairs PSMC2 ATPase activity and disrupts 26S proteasome assembly. Has also been reported to stimulate the proteolytic activity of the 26S proteasome. The polypeptide is Ubiquitin-like domain-containing CTD phosphatase 1 (UBLCP1) (Gallus gallus (Chicken)).